The following is a 211-amino-acid chain: MLTIALSKGRILDDTLPLLAEAGIVPTENPDKSRKLIIPTTQEDVRLLIVRATDVPTYVEHGAADLGVAGKDVLMEYTGQGLYEPLDLQIAQCKLMTAGKVGAVEPKGRLRVATKFVNVAKRYYAEQGRQVDIIKLYGSMELAPLIGLADKIIDVVDTGNTLRANGLEPQELIATISSRLVVNKASMKMQHARIQALIDTLRKAVESRHRG.

It belongs to the ATP phosphoribosyltransferase family. Short subfamily. In terms of assembly, heteromultimer composed of HisG and HisZ subunits.

The protein resides in the cytoplasm. It carries out the reaction 1-(5-phospho-beta-D-ribosyl)-ATP + diphosphate = 5-phospho-alpha-D-ribose 1-diphosphate + ATP. It participates in amino-acid biosynthesis; L-histidine biosynthesis; L-histidine from 5-phospho-alpha-D-ribose 1-diphosphate: step 1/9. Functionally, catalyzes the condensation of ATP and 5-phosphoribose 1-diphosphate to form N'-(5'-phosphoribosyl)-ATP (PR-ATP). Has a crucial role in the pathway because the rate of histidine biosynthesis seems to be controlled primarily by regulation of HisG enzymatic activity. The polypeptide is ATP phosphoribosyltransferase (Pseudomonas fluorescens (strain Pf0-1)).